The following is an 809-amino-acid chain: Leucine-rich repeat and calponin homology domain-containing protein (809 aa).

A disordered region spans residues 27–53; the sequence is GSASLPGSGTGSGSGIGHAGNTSSSTS. Positions 34 to 44 are enriched in gly residues; sequence SGTGSGSGIGH. LRR repeat units lie at residues 72–96, 98–121, 122–144, 145–168, 170–189, 191–213, 214–236, 238–258, and 260–282; these read EAHFSGELILTNRKLKDFPRTGTKY, LTDTVIADLSRNRFAELPEEVTTF, AFLETLLLYHNTIRSIPESVKQL, SSLTYLDLRSNQLSSLPREICFLP, QVLLVSNNRLTSLPDELGRL, QTLTDLDASYNQLANLPARLGEL, RSLRSLSLRSNHLLYLPRELTCL, LISLDVSNNKIASLPLEIRHM, and TLVELQLENNPLTSPPASLCMRG. 3 disordered regions span residues 295 to 373, 423 to 442, and 490 to 550; these read TKDE…LHCV, LSYAHSNSSSNGSSPDQDDD, and KHPN…VDDV. The span at 319–336 shows a compositional bias: polar residues; sequence HNSSGNVLEASTTGSTNN. Positions 351–368 are enriched in basic and acidic residues; it reads GLDKRWSHDAPTKSKTDS. Positions 518–532 are enriched in polar residues; it reads NTLPKSIMKQNSNQI. One can recognise a Calponin-homology (CH) domain in the interval 662–776; that stretch reads QREETELMSQ…TVGELFRLHG (115 aa). The segment at 783-809 is disordered; sequence GNSSGAATPTKSPTRTTRATMSPTPLA. Residues 788-809 show a composition bias toward polar residues; that stretch reads AATPTKSPTRTTRATMSPTPLA.

The protein localises to the cytoplasm. It localises to the cytoskeleton. It is found in the cell cortex. Its subcellular location is the cleavage furrow. Its function is as follows. May play a role in the stabilization of the actin-rich cell cortex during cell division. The sequence is that of Leucine-rich repeat and calponin homology domain-containing protein from Drosophila melanogaster (Fruit fly).